Reading from the N-terminus, the 109-residue chain is Large ribosomal subunit protein uL24 (109 aa).

Belongs to the universal ribosomal protein uL24 family. As to quaternary structure, part of the 50S ribosomal subunit.

Functionally, one of two assembly initiator proteins, it binds directly to the 5'-end of the 23S rRNA, where it nucleates assembly of the 50S subunit. One of the proteins that surrounds the polypeptide exit tunnel on the outside of the subunit. This Rickettsia massiliae (strain Mtu5) protein is Large ribosomal subunit protein uL24.